Reading from the N-terminus, the 490-residue chain is tRNA modification GTPase MnmE (490 aa).

Residues R23, E80, and K133 each contribute to the (6S)-5-formyl-5,6,7,8-tetrahydrofolate site. The 184-residue stretch at 229–412 (GIEVVIAGQP…LRRILLEVAG (184 aa)) folds into the TrmE-type G domain. N239 provides a ligand contact to K(+). GTP-binding positions include 239-244 (NAGKSS), 258-264 (TPVAGTT), and 283-286 (DTAG). A Mg(2+)-binding site is contributed by S243. Positions 258, 260, and 263 each coordinate K(+). T264 lines the Mg(2+) pocket. Over residues 366–382 (PTAPTESAAVPPASARP) the composition is skewed to low complexity. The segment at 366 to 388 (PTAPTESAAVPPASARPAPAPRP) is disordered. Position 393–395 (393–395 (SAR)) interacts with GTP. K490 contacts (6S)-5-formyl-5,6,7,8-tetrahydrofolate.

Belongs to the TRAFAC class TrmE-Era-EngA-EngB-Septin-like GTPase superfamily. TrmE GTPase family. As to quaternary structure, homodimer. Heterotetramer of two MnmE and two MnmG subunits. The cofactor is K(+).

It localises to the cytoplasm. In terms of biological role, exhibits a very high intrinsic GTPase hydrolysis rate. Involved in the addition of a carboxymethylaminomethyl (cmnm) group at the wobble position (U34) of certain tRNAs, forming tRNA-cmnm(5)s(2)U34. The polypeptide is tRNA modification GTPase MnmE (Verminephrobacter eiseniae (strain EF01-2)).